Consider the following 452-residue polypeptide: UDP-N-acetylmuramoylalanine--D-glutamate ligase (452 aa).

Residue 119–125 coordinates ATP; sequence GSNGKTT.

The protein belongs to the MurCDEF family.

Its subcellular location is the cytoplasm. The catalysed reaction is UDP-N-acetyl-alpha-D-muramoyl-L-alanine + D-glutamate + ATP = UDP-N-acetyl-alpha-D-muramoyl-L-alanyl-D-glutamate + ADP + phosphate + H(+). Its pathway is cell wall biogenesis; peptidoglycan biosynthesis. Cell wall formation. Catalyzes the addition of glutamate to the nucleotide precursor UDP-N-acetylmuramoyl-L-alanine (UMA). The sequence is that of UDP-N-acetylmuramoylalanine--D-glutamate ligase from Streptococcus pyogenes serotype M28 (strain MGAS6180).